Consider the following 317-residue polypeptide: Zinc finger protein CRM3 (317 aa).

The segment covering 1–15 (MNFSLSKQSSEKQSS) has biased composition (low complexity). The interval 1-22 (MNFSLSKQSSEKQSSYTDKSRS) is disordered. 2 consecutive C2H2-type zinc fingers follow at residues 254-276 (KQCP…YLIH) and 282-306 (FKCT…LKSH).

It is found in the nucleus. Functionally, probable transcription factor involved in the regulation of the transcription of genes involved in cell rescue and defense, as well as cell cycle and DNA processing. The protein is Zinc finger protein CRM3 of Saccharomyces cerevisiae (strain ATCC 204508 / S288c) (Baker's yeast).